Consider the following 142-residue polypeptide: uncharacterized protein (142 aa).

Residues 70–94 are disordered; that stretch reads PKSVSNSKKKKEKAEKGLLRPTTKP. A compositionally biased stretch (basic and acidic residues) spans 81-94; it reads EKAEKGLLRPTTKP.

This is an uncharacterized protein from Bacillus subtilis (strain 168).